Consider the following 742-residue polypeptide: Phosphoribosylformylglycinamidine synthase subunit PurL (742 aa).

His54 is an active-site residue. Tyr57 and Lys96 together coordinate ATP. Mg(2+) is bound at residue Glu98. Residues 99-102 (SHNH) and Arg121 each bind substrate. His100 serves as the catalytic Proton acceptor. Asp122 contacts Mg(2+). Gln245 contacts substrate. Asp273 is a Mg(2+) binding site. Residue 317 to 319 (ESQ) participates in substrate binding. Asp500 and Gly537 together coordinate ATP. Asn538 contributes to the Mg(2+) binding site. Ser540 contributes to the substrate binding site.

The protein belongs to the FGAMS family. Monomer. Part of the FGAM synthase complex composed of 1 PurL, 1 PurQ and 2 PurS subunits.

Its subcellular location is the cytoplasm. The enzyme catalyses N(2)-formyl-N(1)-(5-phospho-beta-D-ribosyl)glycinamide + L-glutamine + ATP + H2O = 2-formamido-N(1)-(5-O-phospho-beta-D-ribosyl)acetamidine + L-glutamate + ADP + phosphate + H(+). The protein operates within purine metabolism; IMP biosynthesis via de novo pathway; 5-amino-1-(5-phospho-D-ribosyl)imidazole from N(2)-formyl-N(1)-(5-phospho-D-ribosyl)glycinamide: step 1/2. In terms of biological role, part of the phosphoribosylformylglycinamidine synthase complex involved in the purines biosynthetic pathway. Catalyzes the ATP-dependent conversion of formylglycinamide ribonucleotide (FGAR) and glutamine to yield formylglycinamidine ribonucleotide (FGAM) and glutamate. The FGAM synthase complex is composed of three subunits. PurQ produces an ammonia molecule by converting glutamine to glutamate. PurL transfers the ammonia molecule to FGAR to form FGAM in an ATP-dependent manner. PurS interacts with PurQ and PurL and is thought to assist in the transfer of the ammonia molecule from PurQ to PurL. The chain is Phosphoribosylformylglycinamidine synthase subunit PurL from Geobacillus thermodenitrificans (strain NG80-2).